Consider the following 379-residue polypeptide: Cytochrome b (379 aa).

4 helical membrane passes run 33–53 (FGSLLGMCLGLQILTGLFLAM), 77–98 (WLIRYMHANGASMFFIFLYFHI), 113–133 (WNMGVLLLLTTMATAFMGYVL), and 178–198 (FFAFHFILPFIITAMVMIHLL). Heme b contacts are provided by histidine 83 and histidine 97. Residues histidine 182 and histidine 196 each coordinate heme b. Histidine 201 provides a ligand contact to a ubiquinone. 4 helical membrane-spanning segments follow: residues 226–246 (IKDILGALFMIITLMSLVMFS), 288–308 (LGGVLALASSILILMLFPILH), 320–340 (LSQCLMWMLVTNLLILTWIGG), and 347–367 (FITIGQMASMTYFFTTLILMP).

Belongs to the cytochrome b family. As to quaternary structure, the cytochrome bc1 complex contains 11 subunits: 3 respiratory subunits (MT-CYB, CYC1 and UQCRFS1), 2 core proteins (UQCRC1 and UQCRC2) and 6 low-molecular weight proteins (UQCRH/QCR6, UQCRB/QCR7, UQCRQ/QCR8, UQCR10/QCR9, UQCR11/QCR10 and a cleavage product of UQCRFS1). This cytochrome bc1 complex then forms a dimer. It depends on heme b as a cofactor.

It localises to the mitochondrion inner membrane. Component of the ubiquinol-cytochrome c reductase complex (complex III or cytochrome b-c1 complex) that is part of the mitochondrial respiratory chain. The b-c1 complex mediates electron transfer from ubiquinol to cytochrome c. Contributes to the generation of a proton gradient across the mitochondrial membrane that is then used for ATP synthesis. This Ctenomys leucodon (White-toothed tuco-tuco) protein is Cytochrome b (MT-CYB).